Reading from the N-terminus, the 265-residue chain is MNKEYKILDNGFLKLIDFMGDDRRIVKAARISYREESVKRKDAELIDYLIRNGHTSPLEQVVFTFHVKAPIFVARQWMRHRTARINEVSGCYSLAREEFYVPLEEDLKCQTSSNSSEKEFKSLEKLSDKIKHHQKHSYELYQDMINANIPKELSRIVLPLSLYTEWYWQIDLNNLFHFIKLRLALDSPKEIKENSPKEMREYAKALISIVREIVPIAFNSFENHFLRGKRFSHEEIIAIINALDLNKLSMDAEKLNLLKDKLGID.

The ThyX domain maps to 11–224; sequence GFLKLIDFMG…PIAFNSFENH (214 aa). Residues S56, 79–81, and E87 contribute to the FAD site; that span reads RHR. 76–79 provides a ligand contact to dUMP; sequence QWMR. Residues 79-89 carry the ThyX motif motif; that stretch reads RHRTARINEVS. Residue R155 coordinates dUMP. Residues 171–173 and H177 contribute to the FAD site; that span reads DLN. Position 182 (R182) interacts with dUMP. R182 functions as the Involved in ionization of N3 of dUMP, leading to its activation in the catalytic mechanism.

This sequence belongs to the thymidylate synthase ThyX family. In terms of assembly, homotetramer. It depends on FAD as a cofactor.

The enzyme catalyses dUMP + (6R)-5,10-methylene-5,6,7,8-tetrahydrofolate + NADPH + H(+) = dTMP + (6S)-5,6,7,8-tetrahydrofolate + NADP(+). It participates in pyrimidine metabolism; dTTP biosynthesis. Catalyzes the reductive methylation of 2'-deoxyuridine-5'-monophosphate (dUMP) to 2'-deoxythymidine-5'-monophosphate (dTMP) while utilizing 5,10-methylenetetrahydrofolate (mTHF) as the methyl donor, and NADPH and FADH(2) as the reductant. In Borreliella burgdorferi (strain ATCC 35210 / DSM 4680 / CIP 102532 / B31) (Borrelia burgdorferi), this protein is Flavin-dependent thymidylate synthase.